We begin with the raw amino-acid sequence, 400 residues long: Arrestin, lateral eye (400 aa).

Belongs to the arrestin family. In terms of processing, phosphorylated.

In terms of biological role, plays an important role in the photoreceptor transduction. The sequence is that of Arrestin, lateral eye from Limulus polyphemus (Atlantic horseshoe crab).